Here is a 270-residue protein sequence, read N- to C-terminus: MTTIAVIGGGQIGEALVSGLIAANMNPQNIRVTNRSEERGQELRDRYGILNMTDNSQAADEADVVFLCVKPKFIVEVLSEITGTLDNNSAQSVVVSMAAGISIAAMEESASAGLPVVRVMPNTPMLVGKGMSTVTKGRYVDAEQLEQVKDLLSTVGDVLEVAESDIDAVTAMSGSSPAYLFLVTEALIEAGVNLGLPRATAKKLAVASFEGAATMMKETGKEPSELRAGVSSPAGTTVAAIRELEESGIRGAFYRAAQACADRSEELGKH.

This sequence belongs to the pyrroline-5-carboxylate reductase family.

It localises to the cytoplasm. The catalysed reaction is L-proline + NADP(+) = (S)-1-pyrroline-5-carboxylate + NADPH + 2 H(+). It carries out the reaction L-proline + NAD(+) = (S)-1-pyrroline-5-carboxylate + NADH + 2 H(+). It participates in amino-acid biosynthesis; L-proline biosynthesis; L-proline from L-glutamate 5-semialdehyde: step 1/1. Catalyzes the reduction of 1-pyrroline-5-carboxylate (PCA) to L-proline. This chain is Pyrroline-5-carboxylate reductase, found in Corynebacterium melassecola.